We begin with the raw amino-acid sequence, 167 residues long: Photosystem I assembly protein Ycf3 (167 aa).

TPR repeat units follow at residues 35–68 (AFAY…EVDA), 72–105 (SYIL…NPSL), and 120–153 (GEQA…APTN).

This sequence belongs to the Ycf3 family.

It localises to the plastid. The protein localises to the chloroplast thylakoid membrane. In terms of biological role, essential for the assembly of the photosystem I (PSI) complex. May act as a chaperone-like factor to guide the assembly of the PSI subunits. The chain is Photosystem I assembly protein Ycf3 from Stigeoclonium helveticum (Green alga).